The primary structure comprises 73 residues: Beta-defensin 39 (73 aa).

Residues 1–23 (MKISCFLLLVLSLSCFQINSVSG) form the signal peptide. 3 disulfides stabilise this stretch: C29–C58, C36–C51, and C41–C59.

The protein belongs to the beta-defensin family.

It localises to the secreted. In terms of biological role, has antibacterial activity. The chain is Beta-defensin 39 (Defb39) from Rattus norvegicus (Rat).